The primary structure comprises 205 residues: Cbp/p300-interacting transactivator 3 (205 aa).

Belongs to the CITED family.

It localises to the nucleus. Its function is as follows. Acts as a transcriptional coactivator. Enhances estrogen-dependent transactivation mediated by estrogen receptors. The sequence is that of Cbp/p300-interacting transactivator 3 (CITED3) from Gallus gallus (Chicken).